We begin with the raw amino-acid sequence, 452 residues long: UPF0210 protein Hore_14430 (452 aa).

The protein belongs to the UPF0210 family. Homodimer.

This is UPF0210 protein Hore_14430 from Halothermothrix orenii (strain H 168 / OCM 544 / DSM 9562).